The sequence spans 200 residues: dITP/XTP pyrophosphatase (200 aa).

Residue 7-12 (SNNRGK) coordinates substrate. The Proton acceptor role is filled by Asp-68. Asp-68 is a binding site for Mg(2+). Substrate-binding positions include Ala-69, 154–157 (FGFD), Lys-177, and 182–183 (HR).

This sequence belongs to the HAM1 NTPase family. In terms of assembly, homodimer. Requires Mg(2+) as cofactor.

The enzyme catalyses XTP + H2O = XMP + diphosphate + H(+). The catalysed reaction is dITP + H2O = dIMP + diphosphate + H(+). It carries out the reaction ITP + H2O = IMP + diphosphate + H(+). Pyrophosphatase that catalyzes the hydrolysis of nucleoside triphosphates to their monophosphate derivatives, with a high preference for the non-canonical purine nucleotides XTP (xanthosine triphosphate), dITP (deoxyinosine triphosphate) and ITP. Seems to function as a house-cleaning enzyme that removes non-canonical purine nucleotides from the nucleotide pool, thus preventing their incorporation into DNA/RNA and avoiding chromosomal lesions. In Delftia acidovorans (strain DSM 14801 / SPH-1), this protein is dITP/XTP pyrophosphatase.